A 142-amino-acid polypeptide reads, in one-letter code: Glycine-rich RNA-binding protein 1 (142 aa).

Residues 1–65 form the RRM domain; that stretch reads NSLHSAFSTY…RNITVNEAQS (65 aa). Positions 48 to 101 are disordered; sequence MNGKELDGRNITVNEAQSRGGRGGGGGGGYGGGRGGGGGYGRRDGGGGGYGGGG. The span at 67–101 shows a compositional bias: gly residues; the sequence is GGRGGGGGGGYGGGRGGGGGYGRRDGGGGGYGGGG.

Possibly has a role in RNA transcription or processing during stress. In Sorghum bicolor (Sorghum), this protein is Glycine-rich RNA-binding protein 1 (GRP1).